The primary structure comprises 384 residues: 8-amino-7-oxononanoate synthase (384 aa).

Position 21 (Arg21) interacts with substrate. 108–109 (GF) contributes to the pyridoxal 5'-phosphate binding site. Substrate is bound at residue His133. Pyridoxal 5'-phosphate is bound by residues Ser179, His207, and Thr233. Lys236 is subject to N6-(pyridoxal phosphate)lysine. Position 352 (Thr352) interacts with substrate.

This sequence belongs to the class-II pyridoxal-phosphate-dependent aminotransferase family. BioF subfamily. In terms of assembly, homodimer. It depends on pyridoxal 5'-phosphate as a cofactor.

It carries out the reaction 6-carboxyhexanoyl-[ACP] + L-alanine + H(+) = (8S)-8-amino-7-oxononanoate + holo-[ACP] + CO2. It participates in cofactor biosynthesis; biotin biosynthesis. In terms of biological role, catalyzes the decarboxylative condensation of pimeloyl-[acyl-carrier protein] and L-alanine to produce 8-amino-7-oxononanoate (AON), [acyl-carrier protein], and carbon dioxide. The sequence is that of 8-amino-7-oxononanoate synthase from Shigella flexneri serotype 5b (strain 8401).